Here is a 454-residue protein sequence, read N- to C-terminus: COBRA-like protein 6 (454 aa).

The signal sequence occupies residues 1-24 (MGAMLNLLLVVTVILCSILSPTRF). Asparagine 104, asparagine 191, asparagine 320, asparagine 355, and asparagine 391 each carry an N-linked (GlcNAc...) asparagine glycan. Residue serine 429 is the site of GPI-anchor amidated serine attachment. The propeptide at 430-454 (SSSSAVISSVSVVFCFLLHHLLLLV) is removed in mature form.

Belongs to the COBRA family. As to expression, expressed in flowers and siliques.

The protein resides in the cell membrane. The polypeptide is COBRA-like protein 6 (COBL6) (Arabidopsis thaliana (Mouse-ear cress)).